The following is a 307-amino-acid chain: 2-methoxy-6-polyprenyl-1,4-benzoquinol methylase, mitochondrial (307 aa).

The N-terminal 19 residues, 1 to 19 (MLISSRIVRSSLVNVPLRL), are a transit peptide targeting the mitochondrion. Residues Ser122, Asp148, 179–180 (NG), and Ser197 contribute to the S-adenosyl-L-methionine site.

The protein belongs to the class I-like SAM-binding methyltransferase superfamily. MenG/UbiE family. Component of a multi-subunit COQ enzyme complex, composed of at least COQ3, COQ4, COQ5, COQ6, COQ7 and COQ9. Interacts with COQ3.

Its subcellular location is the mitochondrion inner membrane. The enzyme catalyses 2-methoxy-6-(all-trans-hexaprenyl)benzene-1,4-diol + S-adenosyl-L-methionine = 5-methoxy-2-methyl-3-(all-trans-hexaprenyl)benzene-1,4-diol + S-adenosyl-L-homocysteine + H(+). It functions in the pathway cofactor biosynthesis; ubiquinone biosynthesis. Functionally, methyltransferase required for the conversion of 2-hexaprenyl-6-methoxy-1,4-benzoquinol (DDMQH2) to 2-hexaprenyl-3-methyl-6-methoxy-1,4-benzoquinol (DMQH2). In Saccharomyces cerevisiae (strain ATCC 204508 / S288c) (Baker's yeast), this protein is 2-methoxy-6-polyprenyl-1,4-benzoquinol methylase, mitochondrial.